The primary structure comprises 408 residues: LL-diaminopimelate aminotransferase (408 aa).

Positions 15 and 42 each coordinate substrate. Pyridoxal 5'-phosphate-binding positions include Tyr72, Ser108–Lys109, Tyr132, Asn187, Tyr218, and Ser246–Ser248. Residues Lys109, Tyr132, and Asn187 each coordinate substrate. An N6-(pyridoxal phosphate)lysine modification is found at Lys249. Pyridoxal 5'-phosphate contacts are provided by Arg257 and Asn292. Positions 292 and 388 each coordinate substrate.

This sequence belongs to the class-I pyridoxal-phosphate-dependent aminotransferase family. LL-diaminopimelate aminotransferase subfamily. As to quaternary structure, homodimer. The cofactor is pyridoxal 5'-phosphate.

The catalysed reaction is (2S,6S)-2,6-diaminopimelate + 2-oxoglutarate = (S)-2,3,4,5-tetrahydrodipicolinate + L-glutamate + H2O + H(+). Its pathway is amino-acid biosynthesis; L-lysine biosynthesis via DAP pathway; LL-2,6-diaminopimelate from (S)-tetrahydrodipicolinate (aminotransferase route): step 1/1. In terms of biological role, involved in the synthesis of meso-diaminopimelate (m-DAP or DL-DAP), required for both lysine and peptidoglycan biosynthesis. Catalyzes the direct conversion of tetrahydrodipicolinate to LL-diaminopimelate. The chain is LL-diaminopimelate aminotransferase from Prochlorococcus marinus (strain MIT 9303).